A 339-amino-acid chain; its full sequence is Phosphoribosylformylglycinamidine cyclo-ligase (339 aa).

The protein belongs to the AIR synthase family.

The protein localises to the cytoplasm. It catalyses the reaction 2-formamido-N(1)-(5-O-phospho-beta-D-ribosyl)acetamidine + ATP = 5-amino-1-(5-phospho-beta-D-ribosyl)imidazole + ADP + phosphate + H(+). The protein operates within purine metabolism; IMP biosynthesis via de novo pathway; 5-amino-1-(5-phospho-D-ribosyl)imidazole from N(2)-formyl-N(1)-(5-phospho-D-ribosyl)glycinamide: step 2/2. The chain is Phosphoribosylformylglycinamidine cyclo-ligase from Methanobrevibacter smithii (strain ATCC 35061 / DSM 861 / OCM 144 / PS).